The primary structure comprises 429 residues: MFKRIALVCALFSGICFAEGKQLLDKVVAIVNDNVITSSELNAQVELSKKQIIAQNMQMPDESVLRKQVLQHLIDVDLEMQMAKQNGITIENAEIDEAIEKIAASNHLNLSQMRDEITKQGISWQEYRQNIRKEMLISRVQQKAVGKDIIVTNEQVEQYLKNAGRIENSNLTYHLKNIVIPLSEEPTTKQLQRAKIEAENLLNKIKKGEDFSRLAIEESSGEFALEGGDLGERHLAELPEVFAKEVVHMKVGQVAGPIRAGNGFHLIKLVAVGGENQRHVITQTHVRHILLKPDASMVPSEAIKQVNNIYRQIQSGKDFALMAKQYSLDAASAVKGGDLGWVNPGELVPEFEKTMNSLPLHKVSKPVKTQYGWHLIEVIARRQKDDSEAFKKQQVRQFLQQRKFVEAVQNWQQHLRSQAYINIVDKDLA.

The N-terminal stretch at 1 to 18 (MFKRIALVCALFSGICFA) is a signal peptide. 2 PpiC domains span residues 170–271 (NLTY…KLVA) and 281–380 (ITQT…EVIA).

It localises to the periplasm. The enzyme catalyses [protein]-peptidylproline (omega=180) = [protein]-peptidylproline (omega=0). Functionally, chaperone involved in the correct folding and assembly of outer membrane proteins. Recognizes specific patterns of aromatic residues and the orientation of their side chains, which are found more frequently in integral outer membrane proteins. May act in both early periplasmic and late outer membrane-associated steps of protein maturation. The chain is Chaperone SurA from Legionella pneumophila (strain Paris).